The following is a 158-amino-acid chain: Cyclic pyranopterin monophosphate synthase (158 aa).

Substrate contacts are provided by residues 75–77 (LCH) and 113–114 (ME). Asp-128 is an active-site residue.

This sequence belongs to the MoaC family. In terms of assembly, homohexamer; trimer of dimers.

The catalysed reaction is (8S)-3',8-cyclo-7,8-dihydroguanosine 5'-triphosphate = cyclic pyranopterin phosphate + diphosphate. It participates in cofactor biosynthesis; molybdopterin biosynthesis. Catalyzes the conversion of (8S)-3',8-cyclo-7,8-dihydroguanosine 5'-triphosphate to cyclic pyranopterin monophosphate (cPMP). In Paraburkholderia xenovorans (strain LB400), this protein is Cyclic pyranopterin monophosphate synthase.